A 412-amino-acid polypeptide reads, in one-letter code: MGKQQETILIIGAGIAGLTTSRLLTNNGIPNIVFEASTPDRSQGFAISLQEFGYSALLAALGDLPLSSLIRGVAPDRKIGGSGWIDQALRDNRTGEVLVAPDLTTTKQTIVRANRNALRHWIVDCGEDELDVRYGHKLQRIEGKLGDVTAVFENNAKYKGSLIIAADGVNSTARSQILPNVVPEAIPLIHYHGEFQISHSAFDELIRPHSGHSNILVGVGDRFNTPLSICNITKSQVHLDWSYSRTVKGENDILYCPNVPSEEAKQIPPALLEELDTLSLAEPWKTFLNSESLKAHRVFHWTTRCVYITQDDARHAGEQGVVFVGDSWHAMPIFGGEGGNHALLDGVELANAIITSTESSGRGSWDNVAKNYYGGAWKRSQDAVRRSTQRFFLLHRPATEWKEISEKKKTLA.

Residues 1 to 21 (MGKQQETILIIGAGIAGLTTS) form the signal peptide. FAD contacts are provided by Glu-35 and Ala-46. Asn-92 is a glycosylation site (N-linked (GlcNAc...) asparagine). FAD is bound at residue Arg-119. Asn-170 and Asn-231 each carry an N-linked (GlcNAc...) asparagine glycan. Residues Asp-326 and Gly-339 each contribute to the FAD site.

It belongs to the paxM FAD-dependent monooxygenase family. FAD serves as cofactor.

The protein operates within secondary metabolite biosynthesis. Its function is as follows. FAD-dependent monooxygenase; part of the gene cluster that mediates the biosynthesis of neosartoricin B, a prenylated anthracenone that probably exhibits T-cell antiproliferative activity, suggestive of a physiological role as an immunosuppressive agent. The non-reducing polyketide synthase nscA probably synthesizes and cyclizes the decaketide backbone. The hydrolase nscB then mediates the product release through hydrolysis followed by spontaneous decarboxylation. The prenyltransferase nscD catalyzes the addition of the dimethylallyl group to the aromatic C5. The FAD-dependent monooxygenase nscC is then responsible for the stereospecific hydroxylation at C2. Neosartoricin B can be converted into two additional compounds neosartoricins C and D. Neosartoricin C is a spirocyclic compound that is cyclized through the attack of C3 hydroxyl on C14, followed by dehydration. On the other hand, neosartoricin D is a further cyclized compound in which attack of C2 on C14 in neosartoricin C results in the formation of the acetal-containing dioxabicyclo-octanone ring. Both of these compounds are novel and possibly represent related metabolites of the gene cluster. This is FAD-dependent monooxygenase nscC from Trichophyton verrucosum (strain HKI 0517).